We begin with the raw amino-acid sequence, 299 residues long: Protein-methionine-sulfoxide reductase catalytic subunit MsrP (299 aa).

Positions 1–44 (MAHRWINDLTPADITPRGAWMNRRQVMAGMAGAGLAAFAGSAQA) form a signal peptide, tat-type signal. Residues N59, 62–63 (YE), C117, T152, N200, R205, and 216–218 (SIK) each bind Mo-molybdopterin.

The protein belongs to the MsrP family. As to quaternary structure, heterodimer of a catalytic subunit (MsrP) and a heme-binding subunit (MsrQ). Mo-molybdopterin is required as a cofactor. Predicted to be exported by the Tat system. The position of the signal peptide cleavage has not been experimentally proven.

It localises to the periplasm. The catalysed reaction is L-methionyl-[protein] + a quinone + H2O = L-methionyl-(S)-S-oxide-[protein] + a quinol. It catalyses the reaction L-methionyl-[protein] + a quinone + H2O = L-methionyl-(R)-S-oxide-[protein] + a quinol. Its function is as follows. Part of the MsrPQ system that repairs oxidized periplasmic proteins containing methionine sulfoxide residues (Met-O), using respiratory chain electrons. Thus protects these proteins from oxidative-stress damage caused by reactive species of oxygen and chlorine generated by the host defense mechanisms. MsrPQ is essential for the maintenance of envelope integrity under bleach stress, rescuing a wide series of structurally unrelated periplasmic proteins from methionine oxidation. The catalytic subunit MsrP is non-stereospecific, being able to reduce both (R-) and (S-) diastereoisomers of methionine sulfoxide. In Ruegeria pomeroyi (strain ATCC 700808 / DSM 15171 / DSS-3) (Silicibacter pomeroyi), this protein is Protein-methionine-sulfoxide reductase catalytic subunit MsrP.